A 485-amino-acid chain; its full sequence is ATP synthase subunit beta (485 aa).

A compositionally biased stretch (basic and acidic residues) spans 1–11; it reads MPATETADKNT. The tract at residues 1 to 20 is disordered; that stretch reads MPATETADKNTKSANSDTSG. 170–177 contacts ATP; that stretch reads GGAGVGKT.

It belongs to the ATPase alpha/beta chains family. In terms of assembly, F-type ATPases have 2 components, CF(1) - the catalytic core - and CF(0) - the membrane proton channel. CF(1) has five subunits: alpha(3), beta(3), gamma(1), delta(1), epsilon(1). CF(0) has three main subunits: a(1), b(2) and c(9-12). The alpha and beta chains form an alternating ring which encloses part of the gamma chain. CF(1) is attached to CF(0) by a central stalk formed by the gamma and epsilon chains, while a peripheral stalk is formed by the delta and b chains.

The protein localises to the cell membrane. It catalyses the reaction ATP + H2O + 4 H(+)(in) = ADP + phosphate + 5 H(+)(out). Functionally, produces ATP from ADP in the presence of a proton gradient across the membrane. The catalytic sites are hosted primarily by the beta subunits. The protein is ATP synthase subunit beta of Mycobacterium avium (strain 104).